The following is a 308-amino-acid chain: MQQSHIPVMLNEMLANLAPQDGKSYLDCTFGAGGYSKAILESCNCYVTALDRDPNVIKRAERIKQNYSTRFDFIETNFADSFAKLKEKKFDGIVLDLGVSSMQLDIADRGFSFLHDSPLDMRMSGQGLSAEEFINTVEEKELADIIYKYGDESFSRRIAKRIVEYRKTARINSTGKLAEIVRNSIGFRKGKIDPATKTFQAIRIYINDELRELERFLANVQNILNKDGRLVIVSFHSLEDRIVKHFFKENSEKPVARSKYSKDNPVIDPNKWLKIITNKAEAPSDKEVELNVRARSAKLRAAKAIYEY.

S-adenosyl-L-methionine-binding positions include 33–35 (GGY), aspartate 51, phenylalanine 82, aspartate 96, and glutamine 103.

It belongs to the methyltransferase superfamily. RsmH family.

The protein resides in the cytoplasm. The catalysed reaction is cytidine(1402) in 16S rRNA + S-adenosyl-L-methionine = N(4)-methylcytidine(1402) in 16S rRNA + S-adenosyl-L-homocysteine + H(+). Specifically methylates the N4 position of cytidine in position 1402 (C1402) of 16S rRNA. The sequence is that of Ribosomal RNA small subunit methyltransferase H from Rickettsia canadensis (strain McKiel).